A 304-amino-acid polypeptide reads, in one-letter code: Dihydroorotate dehydrogenase B (NAD(+)), catalytic subunit (304 aa).

Residues Ser-22 and 46-47 (KG) each bind FMN. Residues Lys-46 and 70-74 (NAIGL) each bind substrate. Residues Asn-100 and Asn-128 each coordinate FMN. Asn-128 contributes to the substrate binding site. Residue Cys-131 is the Nucleophile of the active site. Lys-166 and Ile-192 together coordinate FMN. 193–194 (NT) contacts substrate. FMN is bound by residues Gly-218, 244–245 (GG), and 266–267 (GT).

Belongs to the dihydroorotate dehydrogenase family. Type 1 subfamily. Heterotetramer of 2 PyrK and 2 PyrD type B subunits. It depends on FMN as a cofactor.

It localises to the cytoplasm. It carries out the reaction (S)-dihydroorotate + NAD(+) = orotate + NADH + H(+). Its pathway is pyrimidine metabolism; UMP biosynthesis via de novo pathway; orotate from (S)-dihydroorotate (NAD(+) route): step 1/1. Catalyzes the conversion of dihydroorotate to orotate with NAD(+) as electron acceptor. This is Dihydroorotate dehydrogenase B (NAD(+)), catalytic subunit (pyrD) from Pelobacter propionicus (strain DSM 2379 / NBRC 103807 / OttBd1).